The primary structure comprises 728 residues: Ankyrin repeat protein A (728 aa).

ANK repeat units lie at residues 381-410, 429-458, 477-506, 525-554, and 573-602; these read INLP…ETGY, NGFS…KLAA, TSSH…LLIR, YGCP…SLAQ, and ARDT…TLFN.

Belongs to the Toxin_15 family.

In Escherichia coli (strain K12), this protein is Ankyrin repeat protein A (arpA).